The chain runs to 250 residues: Lectin 1 (250 aa).

Asn119 is a glycosylation site (N-linked (GlcNAc...) asparagine; partial). The Mn(2+) site is built by Glu128 and Asp130. The Ca(2+) site is built by Asp130, Tyr132, Asn138, and Asp141. Mn(2+)-binding residues include Asp141 and His146.

The protein belongs to the leguminous lectin family.

Its function is as follows. Di-N-acetylchitobiose specific lectin. The protein is Lectin 1 of Laburnum alpinum (Scotch laburnum).